A 497-amino-acid polypeptide reads, in one-letter code: Serine carboxypeptidase-like 20 (497 aa).

An N-terminal signal peptide occupies residues 1 to 29 (MSIITMVWLMKVFVFVTLLSLVFVITESA). 3 disulfides stabilise this stretch: C90–C386, C254–C266, and C289–C353. N-linked (GlcNAc...) asparagine glycans are attached at residues N111 and N146. S186 is a catalytic residue. N249 carries an N-linked (GlcNAc...) asparagine glycan. Residue N405 is glycosylated (N-linked (GlcNAc...) asparagine). D421 is a catalytic residue. N-linked (GlcNAc...) asparagine glycosylation occurs at N463. H474 is an active-site residue. The short motif at 495–497 (SKI) is the Microbody targeting signal element.

This sequence belongs to the peptidase S10 family. In terms of tissue distribution, ubiquitous.

It is found in the secreted. In terms of biological role, probable carboxypeptidase. This Arabidopsis thaliana (Mouse-ear cress) protein is Serine carboxypeptidase-like 20 (SCPL20).